A 381-amino-acid polypeptide reads, in one-letter code: Spindlin interactor and repressor of chromatin-binding protein (381 aa).

The segment at 42–73 (RVTQQEKTPPPRPSPLEAGSDGCEEPKQQVSW) is disordered. A Glycyl lysine isopeptide (Lys-Gly) (interchain with G-Cter in SUMO2) cross-link involves residue lysine 48. Residues serine 121 and serine 148 each carry the phosphoserine modification. 3 disordered regions span residues 144-264 (AEQP…EVRH), 283-320 (QLRG…LRGT), and 339-381 (LQDW…GNGV). Glycyl lysine isopeptide (Lys-Gly) (interchain with G-Cter in SUMO2) cross-links involve residues lysine 189 and lysine 220. Positions 218–228 (RWKEPPGEEPV) are enriched in basic and acidic residues. 2 positions are modified to phosphoserine: serine 248 and serine 251. A compositionally biased stretch (basic and acidic residues) spans 287 to 299 (PDSKDSPKDREVA). Glycyl lysine isopeptide (Lys-Gly) (interchain with G-Cter in SUMO2) cross-links involve residues lysine 290 and lysine 294. Phosphoserine occurs at positions 308 and 310. A Glycyl lysine isopeptide (Lys-Gly) (interchain with G-Cter in SUMO2) cross-link involves residue lysine 374.

As to quaternary structure, interacts with SPIN1, SPIN2A, SPIN2B, SPIN3 and SPIN4. Interacts with TCF7L2 in a SPIN1-dependent manner. Interacts with PARP1; promoting PARP1 ADP-ribosyltransferase activity.

The protein localises to the nucleus. It localises to the chromosome. Chromatin protein that stabilizes SPIN1 and enhances its association with histone H3 trimethylated at both 'Lys-4' and 'Lys-9' (H3K4me3K9me3). Positively regulates poly-ADP-ribosylation in response to DNA damage; acts by facilitating PARP1 ADP-ribosyltransferase activity. The chain is Spindlin interactor and repressor of chromatin-binding protein from Homo sapiens (Human).